The chain runs to 375 residues: MNSLQVLTKKVLIENKAFSNYHEDDIFILQQLGLWWHNGPIGFCKQCKMVTSGSMSCSDVDSYELDRALVRAVKKNQTDLIKLFVLWGANINYGIICAKTERTKVLCIQLGADPKFLDVGLYNLFVDLIKQQKVLLAIDIYYDNISILDRFDSHDFYVLIDFIYNCFILNLDEKEKMIKNTYVLKFWFKIAIEFNLIKPIRFLSKKFPHLDDWRLKTAVYLGNVDEIHHAYFQENIRLDPNDMMPLACMYPQNKLGIYYCFALGANINTALETLIRYINHEVNGEITFFSNYGIWSNVHFCISLGANPYTKKIQETLLRQEKNVIMKLLFRKGLLSPHSILHKKILEPSEVRKIISTYEYTETFHSFSLLRDNLR.

This sequence belongs to the asfivirus MGF 360 family.

Its function is as follows. Plays a role in virus cell tropism, and may be required for efficient virus replication in macrophages. This Ornithodoros (relapsing fever ticks) protein is Protein MGF 360-4L.